A 1072-amino-acid chain; its full sequence is MSGRAVSNPQHAQQSFDSGPQLYRDVPELHAVPSPSHSALMDSTHFDDFAFAYHGLPDQSSLVSLADHTHTSQSPTAFPQHQAMSGLAHSGLPFGTLPTGNRSQSMEGSELPPPDRTSPASNALEDPTTDEFGLASRNRADGTDLGGKHKEDKVDATPAWSELKTKAGKERKRLPLACMACRRKKIRCSGEKPACKHCLRSRILCVYKVTTRKAAPRTGYIAMLDKPLKRMEERIIKVIPKSDQEVASSVTRAVVKPVIPGTVPSSKPTKKRGAEEVFGPDLDAWAKAPSKPKIEGDDRPSCLQVQEAEENMLQHEGAEALPSKEIQEHLAEVFFDNIYGQSYHLLHKPSYMRKLKNGTLPPVLVLTVCAVAARFTSNPLVSSSGPELLRGEEWASHAQDICTRRYEWPNLTILTCLLILGLHEFGTCQSGRSWALGGHAIRMAFALQLHKDLEYDPSGRHSTKTQLSFIDREIRRRIMWACFLMDRFNSSGTDRPMFIREDTIQIPLPVKEKYFQFDLPAPTEMLDGQVPHPVSPNDGQIADARENMGVAAFLIRAIALWGRIITYLSQGGKDLDPNPMWEDESHYVKHLNDVVNLEASLPLSLKYSAENLEVHKTENTASQFLFMHICLQHNILFVSRAAMSARKQRGVHDDFFSEASKRTFDAANRISELLREAEQLRCFVSAPFAGYCAFSSTTVHILGIISRNPSMKLAAQANLTTNVKYLHKMKKYWGMFHWMVENVHTQYRNALDAMRAGANVQERATQSSFLQYGDWFNCYPHGLSDAEFMDPATLKRKDSGADGVLEAKSELQSVEEYFSTLPTPRSAENKDTIRAAAPKRKQSAKKQTGMPAQPGQHLDSLQSTDADAVSQERKFSGGLGLQTTGAADFNPLAASNPQNPAFSTTMPPTSPANMTAFAHHAYTPTFFPPELLAMNFGQGSNGNIDPLDRQLVYGGYSMDASTGLGDGQDMTSGLDWDTVASGAQPDGGLQGRRSNVKAGMHGQSAGMADGAGLSGLEASSAWFMPFNMEPPDIGQDPGFNMGGIDPFAGVFGGGGSGLATPNALGGLQQQGP.

The segment at residues 178–205 is a DNA-binding region (zn(2)-C6 fungal-type); it reads CMACRRKKIRCSGEKPACKHCLRSRILC.

It is found in the nucleus. Functionally, zn(2)-C6 fungal-type transcription factor that has a role in the establishment of the fungus within the plant and/or the progress of the disease. Regulates the expression of virulence factors such as SIX1 and SIX6. The protein is Zn(2)-C6 fungal-type transcription factor FTF1a of Fusarium oxysporum f. sp. lycopersici (strain 4287 / CBS 123668 / FGSC 9935 / NRRL 34936) (Fusarium vascular wilt of tomato).